We begin with the raw amino-acid sequence, 635 residues long: Extracellular metalloproteinase 9 (635 aa).

A signal peptide spans 1–19 (MHGLLLAAGLLTLPLRALA). Residues 20–246 (HPGHQSTSIL…IHGVTDYVAD (227 aa)) constitute a propeptide that is removed on maturation. N-linked (GlcNAc...) asparagine glycosylation occurs at Asn-274. Residues 279-307 (TWHSDGNTRYPTTRGNNGIAQDNPSGGTG) form a disordered region. Residue Asn-413 is glycosylated (N-linked (GlcNAc...) asparagine). His-430 contributes to the Zn(2+) binding site. The active site involves Glu-431. A Zn(2+)-binding site is contributed by His-434. Asn-475 carries an N-linked (GlcNAc...) asparagine glycan.

Belongs to the peptidase M36 family. Zn(2+) is required as a cofactor.

Its subcellular location is the secreted. Secreted metalloproteinase that allows assimilation of proteinaceous substrates. This is Extracellular metalloproteinase 9 (MEP9) from Uncinocarpus reesii (strain UAMH 1704).